Here is a 415-residue protein sequence, read N- to C-terminus: Acetylornithine aminotransferase (415 aa).

Residues 115–116 (GA) and Phe-148 contribute to the pyridoxal 5'-phosphate site. Arg-151 is a binding site for N(2)-acetyl-L-ornithine. 239 to 242 (DEVQ) lines the pyridoxal 5'-phosphate pocket. Lys-268 bears the N6-(pyridoxal phosphate)lysine mark. Ser-295 contacts N(2)-acetyl-L-ornithine. Thr-296 serves as a coordination point for pyridoxal 5'-phosphate.

This sequence belongs to the class-III pyridoxal-phosphate-dependent aminotransferase family. ArgD subfamily. Homodimer. Requires pyridoxal 5'-phosphate as cofactor.

It is found in the cytoplasm. It catalyses the reaction N(2)-acetyl-L-ornithine + 2-oxoglutarate = N-acetyl-L-glutamate 5-semialdehyde + L-glutamate. It participates in amino-acid biosynthesis; L-arginine biosynthesis; N(2)-acetyl-L-ornithine from L-glutamate: step 4/4. This is Acetylornithine aminotransferase from Prochlorococcus marinus subsp. pastoris (strain CCMP1986 / NIES-2087 / MED4).